Here is a 332-residue protein sequence, read N- to C-terminus: UPF0194 membrane protein YbhG (332 aa).

Positions 1–16 (MMKKPVVIGLAVVVLA) are cleaved as a signal peptide. Positions 108–209 (EEIAQAAAAV…LNLQDSTLIA (102 aa)) form a coiled coil.

Belongs to the UPF0194 family.

The protein resides in the periplasm. This is UPF0194 membrane protein YbhG from Escherichia coli O45:K1 (strain S88 / ExPEC).